The sequence spans 212 residues: Pyridoxine/pyridoxamine 5'-phosphate oxidase (212 aa).

FMN-binding positions include 59 to 64, 74 to 75, Lys81, and Gln103; these read RMVLMK and YS. Lys64 lines the substrate pocket. Substrate is bound by residues Tyr121 and Arg125. FMN-binding positions include 138–139 and Trp183; that span reads QS. 189 to 191 is a substrate binding site; it reads RLH. Arg193 is an FMN binding site.

The protein belongs to the pyridoxamine 5'-phosphate oxidase family. In terms of assembly, homodimer. Requires FMN as cofactor.

The enzyme catalyses pyridoxamine 5'-phosphate + O2 + H2O = pyridoxal 5'-phosphate + H2O2 + NH4(+). It carries out the reaction pyridoxine 5'-phosphate + O2 = pyridoxal 5'-phosphate + H2O2. The protein operates within cofactor metabolism; pyridoxal 5'-phosphate salvage; pyridoxal 5'-phosphate from pyridoxamine 5'-phosphate: step 1/1. It functions in the pathway cofactor metabolism; pyridoxal 5'-phosphate salvage; pyridoxal 5'-phosphate from pyridoxine 5'-phosphate: step 1/1. Its function is as follows. Catalyzes the oxidation of either pyridoxine 5'-phosphate (PNP) or pyridoxamine 5'-phosphate (PMP) into pyridoxal 5'-phosphate (PLP). The protein is Pyridoxine/pyridoxamine 5'-phosphate oxidase of Rhodopseudomonas palustris (strain TIE-1).